The chain runs to 502 residues: Polyadenylate-binding protein, cytoplasmic and nuclear (502 aa).

RRM domains lie at 14–90 (LTIY…KKDE), 96–176 (GNIF…LYNP), 191–275 (TNCF…KGQR), and 299–376 (KNLY…YFKN).

It belongs to the polyadenylate-binding protein type-1 family.

The protein localises to the cytoplasm. The protein resides in the nucleus. In terms of biological role, binds the poly(A) tail of mRNA. Appears to be an important mediator of the multiple roles of the poly(A) tail in mRNA biogenesis, stability and translation. In Encephalitozoon cuniculi (strain GB-M1) (Microsporidian parasite), this protein is Polyadenylate-binding protein, cytoplasmic and nuclear (PAB1).